Reading from the N-terminus, the 493-residue chain is Betaine aldehyde dehydrogenase (493 aa).

Positions 32, 33, and 99 each coordinate K(+). 156-158 (GAW) provides a ligand contact to NAD(+). Lys168 serves as the catalytic Charge relay system. NAD(+) contacts are provided by residues 182–185 (KPSE) and 235–238 (SVPT). Leu250 serves as a coordination point for K(+). Glu256 acts as the Proton acceptor in catalysis. NAD(+)-binding residues include Gly258, Cys290, and Glu390. Cys290 functions as the Nucleophile in the catalytic mechanism. The residue at position 290 (Cys290) is a Cysteine sulfenic acid (-SOH). The K(+) site is built by Lys460 and Gly463. Glu467 (charge relay system) is an active-site residue.

The protein belongs to the aldehyde dehydrogenase family. As to quaternary structure, dimer of dimers. The cofactor is K(+).

The catalysed reaction is betaine aldehyde + NAD(+) + H2O = glycine betaine + NADH + 2 H(+). The protein operates within amine and polyamine biosynthesis; betaine biosynthesis via choline pathway; betaine from betaine aldehyde: step 1/1. Functionally, involved in the biosynthesis of the osmoprotectant glycine betaine. Catalyzes the irreversible oxidation of betaine aldehyde to the corresponding acid. The chain is Betaine aldehyde dehydrogenase from Agrobacterium fabrum (strain C58 / ATCC 33970) (Agrobacterium tumefaciens (strain C58)).